A 556-amino-acid polypeptide reads, in one-letter code: 2-succinyl-5-enolpyruvyl-6-hydroxy-3-cyclohexene-1-carboxylate synthase (556 aa).

It belongs to the TPP enzyme family. MenD subfamily. As to quaternary structure, homodimer. Mg(2+) serves as cofactor. It depends on Mn(2+) as a cofactor. The cofactor is thiamine diphosphate.

It catalyses the reaction isochorismate + 2-oxoglutarate + H(+) = 5-enolpyruvoyl-6-hydroxy-2-succinyl-cyclohex-3-ene-1-carboxylate + CO2. Its pathway is quinol/quinone metabolism; 1,4-dihydroxy-2-naphthoate biosynthesis; 1,4-dihydroxy-2-naphthoate from chorismate: step 2/7. The protein operates within quinol/quinone metabolism; menaquinone biosynthesis. Catalyzes the thiamine diphosphate-dependent decarboxylation of 2-oxoglutarate and the subsequent addition of the resulting succinic semialdehyde-thiamine pyrophosphate anion to isochorismate to yield 2-succinyl-5-enolpyruvyl-6-hydroxy-3-cyclohexene-1-carboxylate (SEPHCHC). The chain is 2-succinyl-5-enolpyruvyl-6-hydroxy-3-cyclohexene-1-carboxylate synthase from Escherichia coli O8 (strain IAI1).